Here is a 471-residue protein sequence, read N- to C-terminus: MEILCEDNISLSSIPNSLMQLGDDSRLYPNDFNSRDANTSEASNWTIDAENRTNLSCEGYLPPTCLSILHLQEKNWSALLTTVVIILTIAGNILVIMAVSLEKKLQNATNYFLMSLAIADMLLGFLVMPVSMLTILYGYRWPLPSKLCAVWIYLDVLFSTASIMHLCAISLDRYVAIQNPIHHSRFNSRTKAFLKIIAVWTISVGISMPIPVFGLQDDSKVFKEGSCLLADDNFVLIGSFVAFFIPLTIMVITYFLTIKSLQKEATLCVSDLSTRAKLSSFSFLPQSSLSSEKLFQRSIHREPGSYAGRRTMQSISNEQKACKVLGIVFFLFVVMWCPFFITNIMAVICKESCNENVIGALLNVFVWIGYLSSAVNPLVYTLFNKTYRSAFSRYIQCQYKENRKPLQLILVNTIPTLAYKSSQLQVGQKKNSQEDAEPTANDCSMVTLGNQHSEEMCTDNIETVNEKVSCV.

The Extracellular portion of the chain corresponds to 1–80 (MEILCEDNIS…LQEKNWSALL (80 aa)). 5 N-linked (GlcNAc...) asparagine glycosylation sites follow: N8, N38, N44, N51, and N54. A helical transmembrane segment spans residues 81–97 (TTVVIILTIAGNILVIM). Residues 98–111 (AVSLEKKLQNATNY) are Cytoplasmic-facing. The chain crosses the membrane as a helical span at residues 112-137 (FLMSLAIADMLLGFLVMPVSMLTILY). Residues 138–146 (GYRWPLPSK) lie on the Extracellular side of the membrane. Residues 147-171 (LCAVWIYLDVLFSTASIMHLCAISL) traverse the membrane as a helical segment. A disulfide bond links C148 and C227. Residue D155 coordinates serotonin. The DRY motif; important for ligand-induced conformation changes motif lies at 172 to 174 (DRY). Residues 172–191 (DRYVAIQNPIHHSRFNSRTK) lie on the Cytoplasmic side of the membrane. A helical transmembrane segment spans residues 192–215 (AFLKIIAVWTISVGISMPIPVFGL). The Extracellular segment spans residues 216–232 (QDDSKVFKEGSCLLADD). The helical transmembrane segment at 233–258 (NFVLIGSFVAFFIPLTIMVITYFLTI) threads the bilayer. At 259–322 (KSLQKEATLC…QSISNEQKAC (64 aa)) the chain is on the cytoplasmic side. The residue at position 280 (S280) is a Phosphoserine. A helical transmembrane segment spans residues 323-348 (KVLGIVFFLFVVMWCPFFITNIMAVI). N343 is a binding site for serotonin. A disulfide bridge connects residues C349 and C353. Over 349 to 356 (CKESCNEN) the chain is Extracellular. The helical transmembrane segment at 357 to 382 (VIGALLNVFVWIGYLSSAVNPLVYTL) threads the bilayer. Residues 376 to 380 (NPLVY) carry the NPxxY motif; important for ligand-induced conformation changes and signaling motif. Over 383–471 (FNKTYRSAFS…ETVNEKVSCV (89 aa)) the chain is Cytoplasmic. Positions 469 to 471 (SCV) match the PDZ-binding motif.

Belongs to the G-protein coupled receptor 1 family. Interacts (via C-terminus) with MPDZ and PATJ. May interact (via C-terminus) with MPP3, PRDX6, DLG4, DLG1, CASK, APBA1 and MAGI2. Interacts with GRM2 and DRD2; this may affect signaling. In terms of tissue distribution, detected in neurons in brain cortex. Detected in adult intestine, especially in mucosal epithelium, longitudinal and circular layers of muscularis externa and myenteric plexuses. Highly expressed in Paneth cells, and detected at lower levels in enterocytes (at protein level). Detected in neurons in the brain cortex.

The protein localises to the cell membrane. It localises to the cell projection. The protein resides in the dendrite. Its subcellular location is the axon. It is found in the cytoplasmic vesicle. The protein localises to the membrane. It localises to the caveola. The protein resides in the presynapse. G-protein coupled receptor activity is regulated by lipids: oleamide increases HTR2A-mediated activity. G-protein coupled receptor for 5-hydroxytryptamine (serotonin). Also functions as a receptor for various drugs and psychoactive substances, including mescaline, psilocybin, 1-(2,5-dimethoxy-4-iodophenyl)-2-aminopropane (DOI) and lysergic acid diethylamide (LSD). Ligand binding causes a conformation change that triggers signaling via guanine nucleotide-binding proteins (G proteins) and modulates the activity of downstream effectors. HTR2A is coupled to G(q)/G(11) G alpha proteins and activates phospholipase C-beta, releasing diacylglycerol (DAG) and inositol 1,4,5-trisphosphate (IP3) second messengers that modulate the activity of phosphatidylinositol 3-kinase and promote the release of Ca(2+) ions from intracellular stores, respectively. Beta-arrestin family members inhibit signaling via G proteins and mediate activation of alternative signaling pathways. Affects neural activity, perception, cognition and mood. Plays a role in the regulation of behavior, including responses to anxiogenic situations and psychoactive substances. Plays a role in intestinal smooth muscle contraction, and may play a role in arterial vasoconstriction. In Mus musculus (Mouse), this protein is 5-hydroxytryptamine receptor 2A (Htr2a).